We begin with the raw amino-acid sequence, 1267 residues long: Probable cation-transporting ATPase catp-6 (1267 aa).

Over 1 to 32 (MVEAGGARRHRMTLESGDHTLTLFAYRTGPFR) the chain is Extracellular. A helical membrane pass occupies residues 33 to 53 (TILFYALTVLTLGIFRLILHW). At 54–189 (KQKWDVKMRM…RNEIVVQLRP (136 aa)) the chain is on the cytoplasmic side. A helical membrane pass occupies residues 190-210 (ILYLLVMEVITPFYVFQIFSV). At 211-217 (TVWYNDE) the chain is on the extracellular side. The helical transmembrane segment at 218–238 (YAYYASLIVILSLGSIVMDVY) threads the bilayer. Residues 239–390 (QIRTQEIRLR…DFRFTKDLFK (152 aa)) lie on the Cytoplasmic side of the membrane. The helical transmembrane segment at 391 to 411 (FILFLACISGCGFIYTIIVMI) threads the bilayer. At 412 to 424 (MRGNTLRRIIVRS) the chain is on the extracellular side. Residues 425–445 (LDIITITVPPALPAAMSVGII) traverse the membrane as a helical segment. Topologically, residues 446–950 (NAQLRLKKKE…VTSFGIFKYM (505 aa)) are cytoplasmic. D476 serves as the catalytic 4-aspartylphosphate intermediate. 2 residues coordinate Mg(2+): D891 and D895. The chain crosses the membrane as a helical span at residues 951–971 (AGYSLTQFVTVMHLYWISNIL). The Extracellular segment spans residues 972–976 (TDGQF). Residues 977 to 997 (MYIDMFLITMFALLFGNTPAF) form a helical membrane-spanning segment. The Cytoplasmic portion of the chain corresponds to 998–1013 (YRLAHTPPPTRLLSIA). Residues 1014–1034 (SMTSVVGQLIIIGVVQFIVFF) traverse the membrane as a helical segment. Over 1035–1058 (STSQQPWFTPYQPPVDDEVEDKRS) the chain is Extracellular. A helical transmembrane segment spans residues 1059 to 1079 (MQGTALFCVSMFQYIILALVY). The Cytoplasmic portion of the chain corresponds to 1080 to 1097 (SKGPPFRGNLWSNKPMCA). A helical transmembrane segment spans residues 1098 to 1118 (LTIFATLLCLFIVIWPTELVL). Residues 1119 to 1132 (KTLGNVELPSLTFR) lie on the Extracellular side of the membrane. The chain crosses the membrane as a helical span at residues 1133 to 1153 (IFIVIVGAVNAAVSYGFETLF). The Cytoplasmic segment spans residues 1154-1267 (VDFFLLGYWE…EEPEKLERTY (114 aa)). The tract at residues 1232-1256 (ERLISRIGGEPTWLTNPIPPHSLSE) is disordered.

This sequence belongs to the cation transport ATPase (P-type) (TC 3.A.3) family. Type V subfamily.

The protein localises to the membrane. The enzyme catalyses ATP + H2O = ADP + phosphate + H(+). This is Probable cation-transporting ATPase catp-6 from Caenorhabditis elegans.